A 79-amino-acid polypeptide reads, in one-letter code: MSLFDFFKKKKSAQKAKDRLSVAIALDRDSNIYPHLDQMKQEIMEVVKKYSQIKDVNITKDKVGDQDILDIEIVLEEGR.

This sequence belongs to the MinE family.

Prevents the cell division inhibition by proteins MinC and MinD at internal division sites while permitting inhibition at polar sites. This ensures cell division at the proper site by restricting the formation of a division septum at the midpoint of the long axis of the cell. This chain is Cell division topological specificity factor, found in Nitratiruptor sp. (strain SB155-2).